Here is a 365-residue protein sequence, read N- to C-terminus: UDP-N-acetylglucosamine--N-acetylmuramyl-(pentapeptide) pyrophosphoryl-undecaprenol N-acetylglucosamine transferase (365 aa).

UDP-N-acetyl-alpha-D-glucosamine contacts are provided by residues 19–21 (TGG), Asn131, Arg170, Ser201, Ile255, 274–279 (ALTVTE), and Gln300.

This sequence belongs to the glycosyltransferase 28 family. MurG subfamily.

It is found in the cell inner membrane. The catalysed reaction is di-trans,octa-cis-undecaprenyl diphospho-N-acetyl-alpha-D-muramoyl-L-alanyl-D-glutamyl-meso-2,6-diaminopimeloyl-D-alanyl-D-alanine + UDP-N-acetyl-alpha-D-glucosamine = di-trans,octa-cis-undecaprenyl diphospho-[N-acetyl-alpha-D-glucosaminyl-(1-&gt;4)]-N-acetyl-alpha-D-muramoyl-L-alanyl-D-glutamyl-meso-2,6-diaminopimeloyl-D-alanyl-D-alanine + UDP + H(+). Its pathway is cell wall biogenesis; peptidoglycan biosynthesis. In terms of biological role, cell wall formation. Catalyzes the transfer of a GlcNAc subunit on undecaprenyl-pyrophosphoryl-MurNAc-pentapeptide (lipid intermediate I) to form undecaprenyl-pyrophosphoryl-MurNAc-(pentapeptide)GlcNAc (lipid intermediate II). The chain is UDP-N-acetylglucosamine--N-acetylmuramyl-(pentapeptide) pyrophosphoryl-undecaprenol N-acetylglucosamine transferase from Acinetobacter baumannii (strain ATCC 17978 / DSM 105126 / CIP 53.77 / LMG 1025 / NCDC KC755 / 5377).